The primary structure comprises 393 residues: 8-amino-7-oxononanoate synthase (393 aa).

107–108 (GF) is a pyridoxal 5'-phosphate binding site. A substrate-binding site is contributed by H132. Pyridoxal 5'-phosphate-binding positions include S180, 205–208 (DDAH), and 236–239 (TLSK). K239 is modified (N6-(pyridoxal phosphate)lysine). Residue T353 coordinates substrate.

Belongs to the class-II pyridoxal-phosphate-dependent aminotransferase family. BioF subfamily. In terms of assembly, homodimer. Requires pyridoxal 5'-phosphate as cofactor.

It catalyses the reaction 6-carboxyhexanoyl-[ACP] + L-alanine + H(+) = (8S)-8-amino-7-oxononanoate + holo-[ACP] + CO2. The protein operates within cofactor biosynthesis; biotin biosynthesis. Catalyzes the decarboxylative condensation of pimeloyl-[acyl-carrier protein] and L-alanine to produce 8-amino-7-oxononanoate (AON), [acyl-carrier protein], and carbon dioxide. The sequence is that of 8-amino-7-oxononanoate synthase from Coprothermobacter proteolyticus (strain ATCC 35245 / DSM 5265 / OCM 4 / BT).